Reading from the N-terminus, the 257-residue chain is MDRIIEKLDHGWWVVSHEQKLWLPKGELPYGEAANFDLVGQRALQIGEWQGEPVWLIQQQRRHDMGSVRQVIDLDVGLFQLAGRGVQLAEFYRSHKYCGYCGHEMYPSKTEWAMLCSHCRERYYPQIAPCIIVAIRRDDSILLAQHTRHRNGVHTVLAGFVEVGETLEQAVAREVMEESGIKVKNLRYVTSQPWPFPQSLMTAFMAEYDSGDIVIDPKELLEANWYRYDDLPLLPPPGTVARRLIEDTVAMCRAEYE.

The substrate site is built by lysine 25 and arginine 69. Cysteine 98 and cysteine 101 together coordinate Zn(2+). Residue glutamate 111 participates in substrate binding. Zn(2+)-binding residues include cysteine 116 and cysteine 119. A substrate-binding site is contributed by tyrosine 124. A Nudix hydrolase domain is found at 125–248; it reads PQIAPCIIVA…TVARRLIEDT (124 aa). A divalent metal cation contacts are provided by alanine 158, glutamate 174, and glutamate 178. A Nudix box motif is present at residues 159–180; sequence GFVEVGETLEQAVAREVMEESG. 192-199 contacts substrate; it reads QPWPFPQS. Position 219 (glutamate 219) interacts with a divalent metal cation. A substrate-binding site is contributed by alanine 241.

Belongs to the Nudix hydrolase family. NudC subfamily. Homodimer. It depends on Mg(2+) as a cofactor. Requires Mn(2+) as cofactor. Zn(2+) serves as cofactor.

The catalysed reaction is a 5'-end NAD(+)-phospho-ribonucleoside in mRNA + H2O = a 5'-end phospho-adenosine-phospho-ribonucleoside in mRNA + beta-nicotinamide D-ribonucleotide + 2 H(+). The enzyme catalyses NAD(+) + H2O = beta-nicotinamide D-ribonucleotide + AMP + 2 H(+). It catalyses the reaction NADH + H2O = reduced beta-nicotinamide D-ribonucleotide + AMP + 2 H(+). In terms of biological role, mRNA decapping enzyme that specifically removes the nicotinamide adenine dinucleotide (NAD) cap from a subset of mRNAs by hydrolyzing the diphosphate linkage to produce nicotinamide mononucleotide (NMN) and 5' monophosphate mRNA. The NAD-cap is present at the 5'-end of some mRNAs and stabilizes RNA against 5'-processing. Has preference for mRNAs with a 5'-end purine. Catalyzes the hydrolysis of a broad range of dinucleotide pyrophosphates. The sequence is that of NAD-capped RNA hydrolase NudC from Shigella flexneri serotype 5b (strain 8401).